The sequence spans 135 residues: Small ribosomal subunit protein uS9 (135 aa).

The protein belongs to the universal ribosomal protein uS9 family.

This Archaeoglobus fulgidus (strain ATCC 49558 / DSM 4304 / JCM 9628 / NBRC 100126 / VC-16) protein is Small ribosomal subunit protein uS9 (rps9).